We begin with the raw amino-acid sequence, 952 residues long: Serine/threonine-protein kinase atg1 (952 aa).

One can recognise a Protein kinase domain in the interval 23–329 (FTINEQIGKG…FPEYFAHPVV (307 aa)). ATP contacts are provided by residues 29 to 37 (IGKGSFATV) and K52. Catalysis depends on D166, which acts as the Proton acceptor. 4 disordered regions span residues 331–478 (EPIP…EAEQ), 510–573 (GRAN…SSPS), 783–806 (RLPE…GGSS), and 920–952 (AIAK…TPPK). Basic and acidic residues-rich tracts occupy residues 338–347 (GDDRPKEKSP) and 356–372 (SLRD…HIDT). The span at 386–398 (SPRTPNIESNQPF) shows a compositional bias: polar residues. The span at 429-439 (PRQRDRKDRTE) shows a compositional bias: basic and acidic residues. Composition is skewed to polar residues over residues 459–475 (ANLQ…SITE), 553–573 (PDTS…SSPS), and 793–806 (NNRS…GGSS). Positions 933-952 (SPRRSYSGGTTPTINNTPPK) are enriched in low complexity.

It belongs to the protein kinase superfamily. Ser/Thr protein kinase family. APG1/unc-51/ULK1 subfamily. In terms of assembly, homodimer. Forms a ternary complex with ATG13 and ATG17.

Its subcellular location is the cytoplasm. The protein resides in the preautophagosomal structure membrane. The enzyme catalyses L-seryl-[protein] + ATP = O-phospho-L-seryl-[protein] + ADP + H(+). It carries out the reaction L-threonyl-[protein] + ATP = O-phospho-L-threonyl-[protein] + ADP + H(+). Functionally, serine/threonine protein kinase involved in the cytoplasm to vacuole transport (Cvt) and found to be essential in autophagy, where it is required for the formation of autophagosomes. Involved in the clearance of protein aggregates which cannot be efficiently cleared by the proteasome. Required for selective autophagic degradation of the nucleus (nucleophagy) as well as for mitophagy which contributes to regulate mitochondrial quantity and quality by eliminating the mitochondria to a basal level to fulfill cellular energy requirements and preventing excess ROS production. Also involved in endoplasmic reticulum-specific autophagic process, in selective removal of ER-associated degradation (ERAD) substrates. Plays a key role in ATG9 and ATG23 cycling through the pre-autophagosomal structure and is necessary to promote ATG18 binding to ATG9 through phosphorylation of ATG9. Catalyzes phosphorylation of ATG4, decreasing the interaction between ATG4 and ATG8 and impairing deconjugation of PE-conjugated forms of ATG8. In Botryotinia fuckeliana (strain B05.10) (Noble rot fungus), this protein is Serine/threonine-protein kinase atg1.